The sequence spans 353 residues: Protein RecA (353 aa).

ATP is bound at residue 67 to 74; sequence GPESSGKT.

Belongs to the RecA family.

The protein resides in the cytoplasm. Its function is as follows. Can catalyze the hydrolysis of ATP in the presence of single-stranded DNA, the ATP-dependent uptake of single-stranded DNA by duplex DNA, and the ATP-dependent hybridization of homologous single-stranded DNAs. It interacts with LexA causing its activation and leading to its autocatalytic cleavage. In Chlamydia pneumoniae (Chlamydophila pneumoniae), this protein is Protein RecA.